The primary structure comprises 252 residues: Phosphosulfolactate synthase (252 aa).

The protein belongs to the phosphosulfolactate synthase family.

The enzyme catalyses (2R)-O-phospho-3-sulfolactate = phosphoenolpyruvate + sulfite + H(+). In terms of biological role, catalyzes the addition of sulfite to phosphoenolpyruvate (PEP) to yield (2R)-phospho-3-sulfolactate (PSL). Is probably involved in the biosynthesis of L-sulfolactate, which is a major constituent of sporulating cells and mature spores. This chain is Phosphosulfolactate synthase (yitD), found in Bacillus subtilis (strain 168).